The chain runs to 177 residues: Large ribosomal subunit protein uL5 (177 aa).

It belongs to the universal ribosomal protein uL5 family. In terms of assembly, part of the 50S ribosomal subunit; part of the 5S rRNA/L5/L18/L25 subcomplex. Contacts the 5S rRNA and the P site tRNA. Forms a bridge to the 30S subunit in the 70S ribosome.

Functionally, this is one of the proteins that bind and probably mediate the attachment of the 5S RNA into the large ribosomal subunit, where it forms part of the central protuberance. In the 70S ribosome it contacts protein S13 of the 30S subunit (bridge B1b), connecting the 2 subunits; this bridge is implicated in subunit movement. Contacts the P site tRNA; the 5S rRNA and some of its associated proteins might help stabilize positioning of ribosome-bound tRNAs. This is Large ribosomal subunit protein uL5 from Anaplasma phagocytophilum (strain HZ).